Reading from the N-terminus, the 512-residue chain is Citrate synthase (512 aa).

Catalysis depends on residues H288, H327, and D383. The segment at 483–512 (AIPKTATGSKSQLSASIEQSFGEKISPQSH) is disordered. The span at 488–501 (ATGSKSQLSASIEQ) shows a compositional bias: polar residues.

This sequence belongs to the citrate synthase family.

It is found in the cytoplasm. The enzyme catalyses oxaloacetate + acetyl-CoA + H2O = citrate + CoA + H(+). Its pathway is carbohydrate metabolism; tricarboxylic acid cycle; isocitrate from oxaloacetate: step 1/2. This Dictyostelium discoideum (Social amoeba) protein is Citrate synthase (gltA).